We begin with the raw amino-acid sequence, 489 residues long: Arginine biosynthesis bifunctional protein ArgJ 2, mitochondrial (489 aa).

The transit peptide at 1–11 (MLLISRIGARH) directs the protein to the mitochondrion. Substrate is bound by residues Thr-205, Lys-234, Thr-245, Glu-341, and Asn-484. The Nucleophile role is filled by Thr-245.

Belongs to the ArgJ family. In terms of assembly, heterodimer of an alpha and a beta chain. Post-translationally, the alpha and beta chains are autoproteolytically processed from a single precursor protein within the mitochondrion.

Its subcellular location is the mitochondrion matrix. It catalyses the reaction N(2)-acetyl-L-ornithine + L-glutamate = N-acetyl-L-glutamate + L-ornithine. The catalysed reaction is L-glutamate + acetyl-CoA = N-acetyl-L-glutamate + CoA + H(+). Its pathway is amino-acid biosynthesis; L-arginine biosynthesis; L-ornithine and N-acetyl-L-glutamate from L-glutamate and N(2)-acetyl-L-ornithine (cyclic): step 1/1. It participates in amino-acid biosynthesis; L-arginine biosynthesis; N(2)-acetyl-L-ornithine from L-glutamate: step 1/4. In terms of biological role, catalyzes two activities which are involved in the cyclic version of arginine biosynthesis: the synthesis of acetylglutamate from glutamate and acetyl-CoA, and of ornithine by transacetylation between acetylornithine and glutamate. In Sclerotinia sclerotiorum (strain ATCC 18683 / 1980 / Ss-1) (White mold), this protein is Arginine biosynthesis bifunctional protein ArgJ 2, mitochondrial.